Consider the following 354-residue polypeptide: DNA polymerase IV (354 aa).

A UmuC domain is found at 6–187; it reads IIHVDCDCFY…LPVARLHGVG (182 aa). Residues Asp10 and Asp105 each coordinate Mg(2+). Glu106 is a catalytic residue.

It belongs to the DNA polymerase type-Y family. Monomer. Mg(2+) is required as a cofactor.

It is found in the cytoplasm. The enzyme catalyses DNA(n) + a 2'-deoxyribonucleoside 5'-triphosphate = DNA(n+1) + diphosphate. Functionally, poorly processive, error-prone DNA polymerase involved in untargeted mutagenesis. Copies undamaged DNA at stalled replication forks, which arise in vivo from mismatched or misaligned primer ends. These misaligned primers can be extended by PolIV. Exhibits no 3'-5' exonuclease (proofreading) activity. May be involved in translesional synthesis, in conjunction with the beta clamp from PolIII. This chain is DNA polymerase IV, found in Pseudomonas putida (strain ATCC 47054 / DSM 6125 / CFBP 8728 / NCIMB 11950 / KT2440).